A 187-amino-acid polypeptide reads, in one-letter code: uncharacterized protein (187 aa).

Residues 1-25 form the signal peptide; the sequence is MSKFVKTAIAAAMVMGAFTSTATIA.

The protein belongs to the fimbrial protein family.

Its function is as follows. Part of the yfcOPQRSUV fimbrial operon. Could contribute to adhesion to various surfaces in specific environmental niches. Increases adhesion to eukaryotic T24 bladder epithelial cells in the absence of fim genes. This is an uncharacterized protein from Escherichia coli (strain K12).